A 138-amino-acid chain; its full sequence is Basic phospholipase A2 DsM-b1/DsM-b1' (138 aa).

Positions 1–16 (MRTLWIVAMCLIGVEG) are cleaved as a signal peptide. 7 cysteine pairs are disulfide-bonded: cysteine 42–cysteine 131, cysteine 44–cysteine 60, cysteine 59–cysteine 111, cysteine 65–cysteine 138, cysteine 66–cysteine 104, cysteine 73–cysteine 97, and cysteine 91–cysteine 102. Ca(2+) contacts are provided by tyrosine 43, glycine 45, and glycine 47. Histidine 63 is a catalytic residue. Position 64 (aspartate 64) interacts with Ca(2+). The active site involves aspartate 105.

It depends on Ca(2+) as a cofactor. In terms of tissue distribution, expressed by the venom gland.

The protein resides in the secreted. It carries out the reaction a 1,2-diacyl-sn-glycero-3-phosphocholine + H2O = a 1-acyl-sn-glycero-3-phosphocholine + a fatty acid + H(+). In terms of biological role, exhibits high hydrolytic activities and shows strong preference for the anionic micelles (dPPC with deoxycholate) to the zwitterionic micelles (dPPC with Triton X-100). PLA2 catalyzes the calcium-dependent hydrolysis of the 2-acyl groups in 3-sn-phosphoglycerides. The protein is Basic phospholipase A2 DsM-b1/DsM-b1' of Daboia siamensis (Eastern Russel's viper).